The sequence spans 235 residues: Probable inactive serine protease 37 (235 aa).

An N-terminal signal peptide occupies residues 1 to 19; the sequence is MKFTFCLTVLAGTFFSAHS. Residues 20 to 233 enclose the Peptidase S1 domain; sequence SVQKDDPSPY…YVSWIESTTK (214 aa). Disulfide bonds link Cys-40–Cys-56, Cys-131–Cys-198, and Cys-163–Cys-177.

This sequence belongs to the peptidase S1 family.

It is found in the cytoplasmic vesicle. The protein localises to the secretory vesicle. Its subcellular location is the acrosome. It localises to the secreted. Plays a role in male fertility. May have a role in sperm migration or binding to zona-intact eggs. Involved in the activation of the proacrosin/acrosin system. The chain is Probable inactive serine protease 37 from Bos taurus (Bovine).